Consider the following 463-residue polypeptide: ATP-dependent protease ATPase subunit HslU (463 aa).

Residues valine 19, 61 to 66 (GVGKTE), aspartate 277, glutamate 341, and arginine 413 contribute to the ATP site.

Belongs to the ClpX chaperone family. HslU subfamily. As to quaternary structure, a double ring-shaped homohexamer of HslV is capped on each side by a ring-shaped HslU homohexamer. The assembly of the HslU/HslV complex is dependent on binding of ATP.

Its subcellular location is the cytoplasm. In terms of biological role, ATPase subunit of a proteasome-like degradation complex; this subunit has chaperone activity. The binding of ATP and its subsequent hydrolysis by HslU are essential for unfolding of protein substrates subsequently hydrolyzed by HslV. HslU recognizes the N-terminal part of its protein substrates and unfolds these before they are guided to HslV for hydrolysis. In Shouchella clausii (strain KSM-K16) (Alkalihalobacillus clausii), this protein is ATP-dependent protease ATPase subunit HslU.